The sequence spans 303 residues: Methionyl-tRNA formyltransferase (303 aa).

110 to 113 (SLLP) contacts (6S)-5,6,7,8-tetrahydrofolate.

Belongs to the Fmt family.

It carries out the reaction L-methionyl-tRNA(fMet) + (6R)-10-formyltetrahydrofolate = N-formyl-L-methionyl-tRNA(fMet) + (6S)-5,6,7,8-tetrahydrofolate + H(+). Functionally, attaches a formyl group to the free amino group of methionyl-tRNA(fMet). The formyl group appears to play a dual role in the initiator identity of N-formylmethionyl-tRNA by promoting its recognition by IF2 and preventing the misappropriation of this tRNA by the elongation apparatus. The chain is Methionyl-tRNA formyltransferase from Ehrlichia ruminantium (strain Gardel).